Consider the following 334-residue polypeptide: Tetraacyldisaccharide 4'-kinase (334 aa).

60 to 67 lines the ATP pocket; that stretch reads TVGGTGKT.

It belongs to the LpxK family.

The catalysed reaction is a lipid A disaccharide + ATP = a lipid IVA + ADP + H(+). It functions in the pathway glycolipid biosynthesis; lipid IV(A) biosynthesis; lipid IV(A) from (3R)-3-hydroxytetradecanoyl-[acyl-carrier-protein] and UDP-N-acetyl-alpha-D-glucosamine: step 6/6. Transfers the gamma-phosphate of ATP to the 4'-position of a tetraacyldisaccharide 1-phosphate intermediate (termed DS-1-P) to form tetraacyldisaccharide 1,4'-bis-phosphate (lipid IVA). This Stutzerimonas stutzeri (strain A1501) (Pseudomonas stutzeri) protein is Tetraacyldisaccharide 4'-kinase.